The primary structure comprises 241 residues: Phosphoribosyl isomerase A (241 aa).

The active-site Proton acceptor is Asp11. The active-site Proton donor is the Asp130.

This sequence belongs to the HisA/HisF family.

The protein resides in the cytoplasm. The catalysed reaction is 1-(5-phospho-beta-D-ribosyl)-5-[(5-phospho-beta-D-ribosylamino)methylideneamino]imidazole-4-carboxamide = 5-[(5-phospho-1-deoxy-D-ribulos-1-ylimino)methylamino]-1-(5-phospho-beta-D-ribosyl)imidazole-4-carboxamide. The enzyme catalyses N-(5-phospho-beta-D-ribosyl)anthranilate = 1-(2-carboxyphenylamino)-1-deoxy-D-ribulose 5-phosphate. It functions in the pathway amino-acid biosynthesis; L-histidine biosynthesis; L-histidine from 5-phospho-alpha-D-ribose 1-diphosphate: step 4/9. Its pathway is amino-acid biosynthesis; L-tryptophan biosynthesis; L-tryptophan from chorismate: step 3/5. Functionally, involved in both the histidine and tryptophan biosynthetic pathways. The polypeptide is Phosphoribosyl isomerase A (Streptomyces griseus subsp. griseus (strain JCM 4626 / CBS 651.72 / NBRC 13350 / KCC S-0626 / ISP 5235)).